Reading from the N-terminus, the 396-residue chain is Tryptophan synthase beta chain (396 aa).

Position 86 is an N6-(pyridoxal phosphate)lysine (lysine 86).

It belongs to the TrpB family. Tetramer of two alpha and two beta chains. Requires pyridoxal 5'-phosphate as cofactor.

It carries out the reaction (1S,2R)-1-C-(indol-3-yl)glycerol 3-phosphate + L-serine = D-glyceraldehyde 3-phosphate + L-tryptophan + H2O. It functions in the pathway amino-acid biosynthesis; L-tryptophan biosynthesis; L-tryptophan from chorismate: step 5/5. In terms of biological role, the beta subunit is responsible for the synthesis of L-tryptophan from indole and L-serine. The protein is Tryptophan synthase beta chain of Photobacterium profundum (strain SS9).